The primary structure comprises 1341 residues: Subtilisin-like protease 2 (1341 aa).

The N-terminal stretch at 1–18 (MLNIIYVVSLILIKFIFY) is a signal peptide. Positions 19 to 686 (KECNNNNNYY…KLYNNKYSFL (668 aa)) are cleaved as a propeptide — inhibition peptide. Disordered stretches follow at residues 85–107 (EKKT…EKKK) and 143–171 (ADVS…NYKN). Residues asparagine 165, asparagine 343, asparagine 449, asparagine 453, and asparagine 492 are each glycosylated (N-linked (GlcNAc...) asparagine). The interval 415 to 474 (KKSKKEKENTQQKGGNNPNVDINILNNNNNNNNNNNSNNNSNSMNDEEINYNNNNNNKES) is disordered. A compositionally biased stretch (low complexity) spans 430 to 474 (NNPNVDINILNNNNNNNNNNNSNNNSNSMNDEEINYNNNNNNKES). The interval 499–530 (IYHNKNDNSYKNKKEGTGKNNDNNDPNNNNNK) is disordered. Residues 502–515 (NKNDNSYKNKKEGT) are compositionally biased toward basic and acidic residues. Residues 517 to 530 (KNNDNNDPNNNNNK) show a composition bias toward low complexity. N-linked (GlcNAc...) asparagine glycans are attached at residues asparagine 550, asparagine 641, and asparagine 728. Residues 687–1136 (NKFLNIEPLI…LYNLYEYDSH (450 aa)) are Extracellular-facing. The 294-residue stretch at 726-1019 (TWNLSIIRVF…DSLVNAEGAV (294 aa)) folds into the Peptidase S8 domain. Catalysis depends on charge relay system residues aspartate 754 and histidine 797. Residues asparagine 820, asparagine 856, asparagine 892, and asparagine 950 are each glycosylated (N-linked (GlcNAc...) asparagine). Serine 960 (charge relay system) is an active-site residue. Residues asparagine 1009 and asparagine 1105 are each glycosylated (N-linked (GlcNAc...) asparagine). A helical transmembrane segment spans residues 1137–1157 (YLLASVILFFLALLSIFVGMI). At 1158–1341 (YMKSRKHSDK…MNQLDDMFMK (184 aa)) the chain is on the cytoplasmic side.

Belongs to the peptidase S8 family. In terms of processing, proteolytically cleaved at the N-terminus to generate a 74kDa intermediate which is further processed into a 72kDa form. The first maturation cleavage is autocatalytic, occurs in the ER and is necessary for the subsequent SUB2 trafficking to the microneme. The second cleavage may be mediated by PMX/plasmepsin X.

The protein localises to the cell membrane. Its subcellular location is the cytoplasmic vesicle. The protein resides in the secretory vesicle. It is found in the microneme membrane. The enzyme catalyses Hydrolysis of proteins with broad specificity for peptide bonds, and a preference for a large uncharged residue in P1. Hydrolyzes peptide amides.. With respect to regulation, activation may be calcium-dependent. Inhibited by the non-covalent interaction with the cleaved propeptide. Functionally, serine protease which plays an essential role in the shedding of AMA1, MSP1 and MSP7 from the surface of the invading merozoite; this step is essential for productive invasion and the release of the adhesion between the erythrocyte and the merozoite. May cleave TRAMP/PTTRAMP, thereby shedding TRAMP from the merozoite surface during erythrocyte invasion. This Plasmodium falciparum (isolate 3D7) protein is Subtilisin-like protease 2.